The chain runs to 107 residues: MAHAKKQARRKLLTSTDDPILSSTFTMRPTSKIADAEIISREHDYIASKTQADSKKKLSSLSVIFDKTVLFEFYGIGDNNEKAIVYPIDPDFLLCDSENNCTLSPFL.

This is an uncharacterized protein from Homo sapiens (Human).